We begin with the raw amino-acid sequence, 314 residues long: L-lactate dehydrogenase 2 (314 aa).

NAD(+) contacts are provided by residues V16, D37, K42, Y68, and 82–83 (GL). Substrate-binding positions include Q85, R91, and 123–126 (NPVD). Residues 121-123 (ATN) and S146 each bind NAD(+). 151 to 154 (DSAR) lines the substrate pocket. Beta-D-fructose 1,6-bisphosphate-binding residues include R156 and H171. H178 functions as the Proton acceptor in the catalytic mechanism. Y223 is subject to Phosphotyrosine. A substrate-binding site is contributed by T232.

This sequence belongs to the LDH/MDH superfamily. LDH family. In terms of assembly, homotetramer.

The protein localises to the cytoplasm. It catalyses the reaction (S)-lactate + NAD(+) = pyruvate + NADH + H(+). It functions in the pathway fermentation; pyruvate fermentation to lactate; (S)-lactate from pyruvate: step 1/1. With respect to regulation, allosterically activated by fructose 1,6-bisphosphate (FBP). Its function is as follows. Catalyzes the conversion of lactate to pyruvate. In Bacillus cereus (strain ATCC 14579 / DSM 31 / CCUG 7414 / JCM 2152 / NBRC 15305 / NCIMB 9373 / NCTC 2599 / NRRL B-3711), this protein is L-lactate dehydrogenase 2.